Here is a 583-residue protein sequence, read N- to C-terminus: Protein cps3 (583 aa).

2 C3H1-type zinc fingers span residues 35 to 62 (SLQH…HDLE) and 64 to 91 (ATEK…HVLP). 3 disordered regions span residues 318–346 (LGRP…NGST), 471–490 (KVSS…YNGT), and 504–532 (RQES…KNLG). Polar residues-rich tracts occupy residues 323-334 (KSPSVPTSVGSN), 475-490 (NLNS…YNGT), and 513-532 (PSLN…KNLG).

It is found in the cytoplasm. Its function is as follows. Responsible for supersensitivity to the spindle poison, isopropyl N-3-chlorophenyl carbamate. Has a role in meiosis. This chain is Protein cps3 (cps3), found in Schizosaccharomyces pombe (strain 972 / ATCC 24843) (Fission yeast).